The sequence spans 180 residues: MAALDLRAELDSLVLQLLGDLEELEGKRTVLNARVEEGWLSLAKARYAMGAKSVGPLQYASHMEPQVCLHASEAQEGLQKFKVVRAGVHAPEEVGPREAGLRRRKGPTKTPEPESSEAPQDPLNWFGILVPHSLRQAQASFRDGLQLAADIASLQNRIDWGRSQLRGLQEKLKQLEPGAA.

Residues 16–37 (QLLGDLEELEGKRTVLNARVEE) are a coiled coil. The segment covering 92 to 101 (EEVGPREAGL) has biased composition (basic and acidic residues). The disordered stretch occupies residues 92–122 (EEVGPREAGLRRRKGPTKTPEPESSEAPQDP). Positions 153-176 (SLQNRIDWGRSQLRGLQEKLKQLE) form a coiled coil.

As to quaternary structure, accessory component of the multisubunit proton-transporting vacuolar (V)-ATPase protein pump. In terms of tissue distribution, expressed throughout the brain.

It is found in the endosome. Its subcellular location is the lysosome. It localises to the endoplasmic reticulum-Golgi intermediate compartment. The protein resides in the cytoplasmic vesicle. The protein localises to the COPI-coated vesicle. It is found in the endoplasmic reticulum. Functionally, accessory component of the proton-transporting vacuolar (V)-ATPase protein pump involved in intracellular iron homeostasis. In aerobic conditions, required for intracellular iron homeostasis, thus triggering the activity of Fe(2+) prolyl hydroxylase (PHD) enzymes, and leading to HIF1A hydroxylation and subsequent proteasomal degradation. Necessary for endolysosomal acidification and lysosomal degradation. May be involved in Golgi homeostasis. This chain is Vacuolar ATPase assembly protein VMA22, found in Homo sapiens (Human).